The sequence spans 52 residues: UPF0391 membrane protein XOO4217 (52 aa).

The next 2 helical transmembrane spans lie at 5–25 (AMIF…GIAG) and 27–47 (ATNI…ISMF).

It belongs to the UPF0391 family.

The protein resides in the cell membrane. This chain is UPF0391 membrane protein XOO4217, found in Xanthomonas oryzae pv. oryzae (strain KACC10331 / KXO85).